The sequence spans 386 residues: 26S proteasome non-ATPase regulatory subunit 13 homolog A (386 aa).

The residue at position 2 (Ala2) is an N-acetylalanine. Residues 173 to 347 form the PCI domain; sequence EFSDFYKSAL…GTIYVSWAQP (175 aa).

It belongs to the proteasome subunit S11 family. As to quaternary structure, component of the 19S regulatory particle (RP/PA700) lid subcomplex of the 26S proteasome. The 26S proteasome is composed of a core protease (CP), known as the 20S proteasome, capped at one or both ends by the 19S regulatory particle (RP/PA700). The RP/PA700 complex is composed of at least 17 different subunits in two subcomplexes, the base and the lid, which form the portions proximal and distal to the 20S proteolytic core, respectively. In terms of tissue distribution, ubiquitous with highest expression in flowers.

Its function is as follows. Acts as a regulatory subunit of the 26S proteasome which is involved in the ATP-dependent degradation of ubiquitinated proteins. The sequence is that of 26S proteasome non-ATPase regulatory subunit 13 homolog A (RPN9A) from Arabidopsis thaliana (Mouse-ear cress).